Reading from the N-terminus, the 1238-residue chain is Erythroid differentiation-related factor 1 (1238 aa).

Disordered regions lie at residues Met-1–Ser-38, Gln-220–Pro-268, Pro-517–Ser-561, and Lys-620–Pro-647. 3 stretches are compositionally biased toward low complexity: residues Ala-9–Ser-38, Ser-223–Glu-241, and Ser-253–Ser-263. Positions Asn-530–Glu-547 are enriched in acidic residues. TPR repeat units lie at residues Ser-693–Tyr-726 and Ala-914–Arg-953.

Its subcellular location is the nucleus. Functionally, transcription factor involved in erythroid differentiation. Involved in transcriptional activation of the globin gene. The sequence is that of Erythroid differentiation-related factor 1 (EDRF1) from Homo sapiens (Human).